Reading from the N-terminus, the 318-residue chain is uncharacterized protein (318 aa).

This is an uncharacterized protein from Orgyia pseudotsugata multicapsid polyhedrosis virus (OpMNPV).